Reading from the N-terminus, the 426-residue chain is Glutamate-1-semialdehyde 2,1-aminomutase (426 aa).

Lys265 is modified (N6-(pyridoxal phosphate)lysine).

It belongs to the class-III pyridoxal-phosphate-dependent aminotransferase family. HemL subfamily. As to quaternary structure, homodimer. Requires pyridoxal 5'-phosphate as cofactor.

Its subcellular location is the cytoplasm. It carries out the reaction (S)-4-amino-5-oxopentanoate = 5-aminolevulinate. The protein operates within porphyrin-containing compound metabolism; protoporphyrin-IX biosynthesis; 5-aminolevulinate from L-glutamyl-tRNA(Glu): step 2/2. The sequence is that of Glutamate-1-semialdehyde 2,1-aminomutase from Actinobacillus pleuropneumoniae serotype 3 (strain JL03).